The primary structure comprises 468 residues: Citrate synthase, mitochondrial (468 aa).

A mitochondrion-targeting transit peptide spans 1-30 (MSLISAGRVCARILGAKNSPCALIAARQAS). Catalysis depends on residues His303 and His349. Arg358 contacts oxaloacetate. Residue Asp404 is part of the active site. Positions 430 and 450 each coordinate oxaloacetate.

It belongs to the citrate synthase family. In terms of assembly, homodimer.

It localises to the mitochondrion matrix. It carries out the reaction oxaloacetate + acetyl-CoA + H2O = citrate + CoA + H(+). It functions in the pathway carbohydrate metabolism; tricarboxylic acid cycle; isocitrate from oxaloacetate: step 1/2. Functionally, key enzyme of the Krebs tricarboxylic acid cycle which catalyzes the synthesis of citrate from acetyl coenzyme A and oxaloacetate. This chain is Citrate synthase, mitochondrial (cs), found in Xenopus laevis (African clawed frog).